Here is a 476-residue protein sequence, read N- to C-terminus: Argininosuccinate lyase (476 aa).

The segment covering 1 to 17 has biased composition (low complexity); that stretch reads MTDTGSSDTNTDTTGTS. The segment at 1-22 is disordered; it reads MTDTGSSDTNTDTTGTSKANTM.

This sequence belongs to the lyase 1 family. Argininosuccinate lyase subfamily.

The protein resides in the cytoplasm. It catalyses the reaction 2-(N(omega)-L-arginino)succinate = fumarate + L-arginine. The protein operates within amino-acid biosynthesis; L-arginine biosynthesis; L-arginine from L-ornithine and carbamoyl phosphate: step 3/3. This is Argininosuccinate lyase from Jannaschia sp. (strain CCS1).